The primary structure comprises 930 residues: Xanthan lyase (930 aa).

The first 25 residues, 1–25 (MLSGILIAALLMTLWGGWQPDIAHA), serve as a signal peptide directing secretion. Xanthan-binding positions include 146–148 (NWW), histidine 246, tyrosine 255, arginine 309, 313–315 (RSY), and asparagine 424. The active-site Proton donor/acceptor is the tyrosine 255. The Ca(2+) site is built by aspartate 515, aspartate 516, and glutamate 517. Residue arginine 612 participates in xanthan binding. Residue glutamate 676 coordinates Ca(2+).

Belongs to the polysaccharide lyase 8 family. As to quaternary structure, monomer.

It localises to the secreted. It carries out the reaction Eliminative cleavage of the terminal beta-D-mannosyl-(1-&gt;4)-beta-D-glucuronosyl linkage of the side-chain of the polysaccharide xanthan, leaving a 4-deoxy-alpha-L-threo-hex-4-enuronosyl group at the terminus of the side-chain.. With respect to regulation, activated by Co(2+) at 1 mM. Completely inhibited by Hg(2+) but not affected by other divalent cations. Intensely inhibited by NaCl and KCl at 150 mM, in particular by the Na(+) and K(+) ions but not the Cl(-) ions. Partially inhibited by iodoacetamide and N-ethylmaleimide at 1 mM but not by dithiothreitol, reduced glutathione or 2-mercaptoethanol. Plays a role in xanthan depolymerization pathway by cleaving the linkage between the terminal mannosyl and glucuronyl residues of the side chain of xanthan to liberate pyruvylated mannose. Is highly specific for pyruvylated side-chains of xanthan and is not effective with hyaluronate, chondroitin A, gellan, heparin or pectin. This chain is Xanthan lyase, found in Bacillus sp. (strain GL1).